The following is a 164-amino-acid chain: Transcriptional repressor NrdR (164 aa).

A zinc finger spans residues 3–34 (CPKCNYNKSSVVDSRQAEDGNTIRRRRECEKC). The 91-residue stretch at 49–139 (LLVVKKDGTR…VYKSFKDVDE (91 aa)) folds into the ATP-cone domain.

The protein belongs to the NrdR family. The cofactor is Zn(2+).

In terms of biological role, negatively regulates transcription of bacterial ribonucleotide reductase nrd genes and operons by binding to NrdR-boxes. The protein is Transcriptional repressor NrdR of Streptococcus uberis (strain ATCC BAA-854 / 0140J).